Reading from the N-terminus, the 80-residue chain is Exodeoxyribonuclease 7 small subunit (80 aa).

Belongs to the XseB family. Heterooligomer composed of large and small subunits.

The protein resides in the cytoplasm. The enzyme catalyses Exonucleolytic cleavage in either 5'- to 3'- or 3'- to 5'-direction to yield nucleoside 5'-phosphates.. Functionally, bidirectionally degrades single-stranded DNA into large acid-insoluble oligonucleotides, which are then degraded further into small acid-soluble oligonucleotides. In Vibrio campbellii (strain ATCC BAA-1116), this protein is Exodeoxyribonuclease 7 small subunit.